An 84-amino-acid polypeptide reads, in one-letter code: N.vectensis toxin 5 (84 aa).

An N-terminal signal peptide occupies residues 1–21 (MNSLLKVAVVCLVMLVACSSG). Intrachain disulfides connect C45/C77, C47/C68, and C61/C78.

As to expression, expressed in ectodermal gland cells. In adult female tissues, highly transcribed in mesenteries (gametes-producing tissue) and slightly transcribed in tentacles, pharynx and physa.

Its function is as follows. Has toxic effects on zebrafish larvae. It causes contractile paralysis and twitching of the tail within 20 minutes, followed by death within 30 minutes. Does not show any toxicity when injected into arthropods (cherry shrimps or grass shrimps). This chain is N.vectensis toxin 5, found in Nematostella vectensis (Starlet sea anemone).